Reading from the N-terminus, the 266-residue chain is Blue copper protein (266 aa).

A signal peptide spans 1–24 (MAYSKILFCFMIGFVGFLPAITMA). 3 Phytocyanin domains span residues 25-56 (TQYL…GDTL), 57-102 (APPP…TVED), and 116-216 (TEYW…TVEG). A glycan (N-linked (GlcNAc...) asparagine) is linked at asparagine 47. A Cu cation-binding site is contributed by histidine 156. N-linked (GlcNAc...) asparagine glycosylation is present at asparagine 162. Cysteine 169 and cysteine 203 form a disulfide bridge. Cu cation is bound by residues cysteine 197, histidine 202, and glutamine 208. A helical transmembrane segment spans residues 245-265 (ITSPYKMFVGGAVSIWTILTL).

It localises to the membrane. This is Blue copper protein from Petunia hybrida (Petunia).